Consider the following 551-residue polypeptide: Probable 4-coumarate--CoA ligase 3 (551 aa).

ATP-binding residues include S205, S206, G207, T208, T209, and K213. Position 253 (F253) interacts with (E)-4-coumaroyl-AMP. K274 contributes to the CoA binding site. Residues 276–346 form an SBD1 region; sequence EPVRFLELIK…RFKGRLVIKQ (71 aa). The (E)-4-coumaroyl-AMP site is built by A323, Q346, G347, and T351. ATP is bound by residues Q346, G347, T351, D430, and R445. The segment at 347-409 is SBD2; sequence GYGATELSPC…IKGPNVMLGY (63 aa). Positions 447 and 451 each coordinate (E)-4-coumaroyl-AMP. 2 residues coordinate CoA: K453 and G454. An ATP-binding site is contributed by K537.

It belongs to the ATP-dependent AMP-binding enzyme family. It depends on Mg(2+) as a cofactor.

It carries out the reaction (E)-4-coumarate + ATP + CoA = (E)-4-coumaroyl-CoA + AMP + diphosphate. The catalysed reaction is (E)-4-coumarate + ATP + H(+) = (E)-4-coumaroyl-AMP + diphosphate. It catalyses the reaction (E)-4-coumaroyl-AMP + CoA = (E)-4-coumaroyl-CoA + AMP + H(+). It functions in the pathway phytoalexin biosynthesis; 3,4',5-trihydroxystilbene biosynthesis; 3,4',5-trihydroxystilbene from trans-4-coumarate: step 1/2. Its function is as follows. Carboxylate--CoA ligase that may use 4-coumarate as substrate. Follows a two-step reaction mechanism, wherein the carboxylate substrate first undergoes adenylation by ATP, followed by a thioesterification in the presence of CoA to yield the final CoA thioester. This chain is Probable 4-coumarate--CoA ligase 3 (4cl3), found in Dictyostelium discoideum (Social amoeba).